The following is a 231-amino-acid chain: 5'-methylthioadenosine/S-adenosylhomocysteine nucleosidase (231 aa).

E12 functions as the Proton acceptor in the catalytic mechanism. Residues G78, V153, and 174 to 175 (ME) each bind substrate. The active-site Proton donor is D198.

This sequence belongs to the PNP/UDP phosphorylase family. MtnN subfamily.

It catalyses the reaction S-adenosyl-L-homocysteine + H2O = S-(5-deoxy-D-ribos-5-yl)-L-homocysteine + adenine. The catalysed reaction is S-methyl-5'-thioadenosine + H2O = 5-(methylsulfanyl)-D-ribose + adenine. The enzyme catalyses 5'-deoxyadenosine + H2O = 5-deoxy-D-ribose + adenine. The protein operates within amino-acid biosynthesis; L-methionine biosynthesis via salvage pathway; S-methyl-5-thio-alpha-D-ribose 1-phosphate from S-methyl-5'-thioadenosine (hydrolase route): step 1/2. Functionally, catalyzes the irreversible cleavage of the glycosidic bond in both 5'-methylthioadenosine (MTA) and S-adenosylhomocysteine (SAH/AdoHcy) to adenine and the corresponding thioribose, 5'-methylthioribose and S-ribosylhomocysteine, respectively. Also cleaves 5'-deoxyadenosine, a toxic by-product of radical S-adenosylmethionine (SAM) enzymes, into 5-deoxyribose and adenine. This is 5'-methylthioadenosine/S-adenosylhomocysteine nucleosidase from Aliivibrio fischeri (strain MJ11) (Vibrio fischeri).